The primary structure comprises 281 residues: Sulfur carrier protein FdhD (281 aa).

The active-site Cysteine persulfide intermediate is the Cys-117.

The protein belongs to the FdhD family.

The protein resides in the cytoplasm. In terms of biological role, required for formate dehydrogenase (FDH) activity. Acts as a sulfur carrier protein that transfers sulfur from IscS to the molybdenum cofactor prior to its insertion into FDH. The protein is Sulfur carrier protein FdhD of Xanthomonas axonopodis pv. citri (strain 306).